The sequence spans 185 residues: Crossover junction endodeoxyribonuclease RuvC (185 aa).

Residues D7, E68, and D141 contribute to the active site. Mg(2+) is bound by residues D7, E68, and D141.

The protein belongs to the RuvC family. As to quaternary structure, homodimer which binds Holliday junction (HJ) DNA. The HJ becomes 2-fold symmetrical on binding to RuvC with unstacked arms; it has a different conformation from HJ DNA in complex with RuvA. In the full resolvosome a probable DNA-RuvA(4)-RuvB(12)-RuvC(2) complex forms which resolves the HJ. Mg(2+) serves as cofactor.

It is found in the cytoplasm. It catalyses the reaction Endonucleolytic cleavage at a junction such as a reciprocal single-stranded crossover between two homologous DNA duplexes (Holliday junction).. Functionally, the RuvA-RuvB-RuvC complex processes Holliday junction (HJ) DNA during genetic recombination and DNA repair. Endonuclease that resolves HJ intermediates. Cleaves cruciform DNA by making single-stranded nicks across the HJ at symmetrical positions within the homologous arms, yielding a 5'-phosphate and a 3'-hydroxyl group; requires a central core of homology in the junction. The consensus cleavage sequence is 5'-(A/T)TT(C/G)-3'. Cleavage occurs on the 3'-side of the TT dinucleotide at the point of strand exchange. HJ branch migration catalyzed by RuvA-RuvB allows RuvC to scan DNA until it finds its consensus sequence, where it cleaves and resolves the cruciform DNA. In Helicobacter hepaticus (strain ATCC 51449 / 3B1), this protein is Crossover junction endodeoxyribonuclease RuvC.